Here is a 465-residue protein sequence, read N- to C-terminus: Pancreatic triacylglycerol lipase (465 aa).

The first 16 residues, 1-16, serve as a signal peptide directing secretion; sequence MLLLWALPLLLGAVAG. Disulfide bonds link Cys20-Cys26 and Cys108-Cys119. Ser170 functions as the Nucleophile in the catalytic mechanism. Asp194 acts as the Charge relay system in catalysis. The Ca(2+) site is built by Glu205, Arg208, Asp210, and Asp213. Residues Cys255 and Cys279 are joined by a disulfide bond. Catalysis depends on His281, which acts as the Charge relay system. 3 disulfide bridges follow: Cys303–Cys314, Cys317–Cys321, and Cys449–Cys465. Residues 355-465 enclose the PLAT domain; that stretch reads WRYQVAVTLS…EDILLTLTPC (111 aa).

The protein belongs to the AB hydrolase superfamily. Lipase family. In terms of assembly, forms a 1:1 stoichiometric complex with (pro)colipase/CLPS.

It localises to the secreted. It carries out the reaction a triacylglycerol + H2O = a diacylglycerol + a fatty acid + H(+). The enzyme catalyses 1,2,3-tributanoylglycerol + H2O = dibutanoylglycerol + butanoate + H(+). It catalyses the reaction 1,2,3-tri-(9Z-octadecenoyl)-glycerol + H2O = di-(9Z)-octadecenoylglycerol + (9Z)-octadecenoate + H(+). The catalysed reaction is all-trans-retinyl hexadecanoate + H2O = all-trans-retinol + hexadecanoate + H(+). It carries out the reaction 1,2-di-(9Z-octadecenoyl)-glycerol + H2O = (9Z-octadecenoyl)-glycerol + (9Z)-octadecenoate + H(+). With respect to regulation, inhibited by bile salts, is reactivated by (pro)colipase/CLPS. In terms of biological role, plays an important role in fat metabolism. It preferentially splits the esters of long-chain fatty acids at positions 1 and 3, producing mainly 2-monoacylglycerol and free fatty acids, and shows considerably higher activity against insoluble emulsified substrates than against soluble ones. In Oryctolagus cuniculus (Rabbit), this protein is Pancreatic triacylglycerol lipase (PNLIP).